The primary structure comprises 1992 residues: E3 ubiquitin-protein ligase TRIP12 (1992 aa).

The span at Met-1–Gly-10 shows a compositional bias: polar residues. 3 disordered regions span residues Met-1–Glu-398, Gln-797–Asp-817, and Ser-938–Asp-1080. Ser-2 bears the N-acetylserine mark. Ser-12 bears the Phosphoserine mark. Residues Arg-18–Asp-27 are compositionally biased toward polar residues. Residues Asp-48–Arg-70 show a composition bias toward basic and acidic residues. 3 positions are modified to phosphoserine: Ser-77, Ser-85, and Ser-100. Positions Pro-78–Ser-88 are enriched in polar residues. The span at Glu-119 to Lys-132 shows a compositional bias: polar residues. Low complexity-rich tracts occupy residues Ser-154–Thr-166 and Pro-175–Val-216. An N6-acetyllysine modification is found at Lys-181. The span at Pro-280–Pro-290 shows a compositional bias: polar residues. Phosphoserine is present on residues Ser-310 and Ser-312. A compositionally biased stretch (polar residues) spans Gln-326 to Arg-338. A compositionally biased stretch (basic and acidic residues) spans Gly-346 to Asp-358. Polar residues-rich tracts occupy residues Glu-360 to Ala-371 and Leu-803 to Ser-812. Residues Met-749 to Lys-836 enclose the WWE domain. Residue Ser-942 is modified to Phosphoserine. The segment covering Thr-948 to Ala-973 has biased composition (low complexity). A phosphoserine mark is found at Ser-991 and Ser-997. Basic residues predominate over residues Lys-1001–Lys-1014. Ser-1016 is modified (phosphoserine). The span at Pro-1017–Asn-1026 shows a compositional bias: basic and acidic residues. A compositionally biased stretch (low complexity) spans Lys-1029 to Ser-1040. Phosphoserine is present on Ser-1030. Positions Phe-1041–Ile-1062 are enriched in polar residues. A phosphoserine mark is found at Ser-1317, Ser-1322, Ser-1329, and Ser-1376. Thr-1377 is modified (phosphothreonine). Disordered stretches follow at residues Ser-1407–Lys-1433 and Thr-1568–Asp-1587. Lys-1425 is subject to N6-acetyllysine. A Phosphoserine modification is found at Ser-1427. Residues Glu-1496–Pro-1570 form a K-box region. The 108-residue stretch at Pro-1885–Ser-1992 folds into the HECT domain. Residue Cys-1959 is the Glycyl thioester intermediate of the active site.

Belongs to the UPL family. K-HECT subfamily. Interacts with MYC; leading to disrupt interaction with isoform p19ARF/ARF of CDKN2A. Interacts with TRADD; leading to disrupt interaction with isoform p19ARF/ARF of CDKN2A. Interacts with SMARCC1; leading to disrupt interaction with SMARCE1.

Its subcellular location is the nucleus. It is found in the nucleoplasm. It carries out the reaction S-ubiquitinyl-[E2 ubiquitin-conjugating enzyme]-L-cysteine + [acceptor protein]-L-lysine = [E2 ubiquitin-conjugating enzyme]-L-cysteine + N(6)-ubiquitinyl-[acceptor protein]-L-lysine.. Its pathway is protein modification; protein ubiquitination. E3 ubiquitin-protein ligase involved in ubiquitin fusion degradation (UFD) pathway and regulation of DNA repair. Part of the ubiquitin fusion degradation (UFD) pathway, a process that mediates ubiquitination of protein at their N-terminus, regardless of the presence of lysine residues in target proteins. Acts as a key regulator of DNA damage response by acting as a suppressor of RNF168, an E3 ubiquitin-protein ligase that promotes accumulation of 'Lys-63'-linked histone H2A and H2AX at DNA damage sites, thereby acting as a guard against excessive spreading of ubiquitinated chromatin at damaged chromosomes. In normal cells, mediates ubiquitination and degradation of isoform p19ARF/ARF of CDKN2A, a lysine-less tumor suppressor required for p53/TP53 activation under oncogenic stress. In cancer cells, however, isoform p19ARF/ARF and TRIP12 are located in different cell compartments, preventing isoform p19ARF/ARF ubiquitination and degradation. Does not mediate ubiquitination of isoform p16-INK4a of CDKN2A. Also catalyzes ubiquitination of NAE1 and SMARCE1, leading to their degradation. Ubiquitination and degradation of target proteins is regulated by interaction with proteins such as MYC, TRADD or SMARCC1, which disrupt the interaction between TRIP12 and target proteins. Mediates ubiquitination of ASXL1: following binding to N(6)-methyladenosine methylated DNA, ASXL1 is ubiquitinated by TRIP12, leading to its degradation and subsequent inactivation of the PR-DUB complex. The polypeptide is E3 ubiquitin-protein ligase TRIP12 (TRIP12) (Homo sapiens (Human)).